The following is a 486-amino-acid chain: L-carnitine:corrinoid methyltransferase (486 aa).

This sequence belongs to the trimethylamine methyltransferase family. In terms of assembly, the L-carnitine:THF methyl transfer system is composed of two methyltransferases, MtcB and MtqA, and the corrinoid protein MtqC.

It catalyses the reaction Co(I)-[quaternary-amine-specific corrinoid protein] + (R)-carnitine + H(+) = (3R)-4-(dimethylamino)-3-hydroxybutanoate + methyl-Co(III)-[quaternary-amine-specific corrinoid protein]. Its function is as follows. Involved in the degradation of the quaternary amine L-carnitine. Component of a corrinoid-dependent methyltransferase system that transfers a methyl group from L-carnitine to tetrahydrofolate (THF), forming methyl-THF, a key intermediate in the Wood-Ljungdahl acetogenesis pathway. MtcB catalyzes the methylation of the corrinoid protein MtqC, using L-carnitine as the methyl donor. L-carnitine demethylation generates the unusual biological product norcarnitine, which is likely degraded by other members of the gut microbiota. In vitro, can methylate free cob(I)alamin. The polypeptide is L-carnitine:corrinoid methyltransferase (Eubacterium limosum).